The following is a 330-amino-acid chain: tRNA uridine(34) hydroxylase (330 aa).

Residues 123 to 217 (SDPEVILVDT…YLEEVKQEES (95 aa)) enclose the Rhodanese domain. C177 acts as the Cysteine persulfide intermediate in catalysis.

The protein belongs to the TrhO family.

The catalysed reaction is uridine(34) in tRNA + AH2 + O2 = 5-hydroxyuridine(34) in tRNA + A + H2O. In terms of biological role, catalyzes oxygen-dependent 5-hydroxyuridine (ho5U) modification at position 34 in tRNAs. The sequence is that of tRNA uridine(34) hydroxylase from Shewanella sp. (strain ANA-3).